The following is a 187-amino-acid chain: Elongation factor P (187 aa).

This sequence belongs to the elongation factor P family.

Its subcellular location is the cytoplasm. Its pathway is protein biosynthesis; polypeptide chain elongation. Its function is as follows. Involved in peptide bond synthesis. Stimulates efficient translation and peptide-bond synthesis on native or reconstituted 70S ribosomes in vitro. Probably functions indirectly by altering the affinity of the ribosome for aminoacyl-tRNA, thus increasing their reactivity as acceptors for peptidyl transferase. The protein is Elongation factor P of Paenarthrobacter aurescens (strain TC1).